The sequence spans 295 residues: Protoheme IX farnesyltransferase (295 aa).

9 consecutive transmembrane segments (helical) span residues 9–29, 36–56, 80–100, 108–128, 135–155, 163–183, 209–229, 230–250, and 265–285; these read ITKP…FFLA, FGVF…GCVF, LVSL…GVGL, LAAL…SLYL, GTLV…CAVS, LTLL…IAIF, IMLY…GGYA, GLNY…MAWK, and FVFS…DFQV.

This sequence belongs to the UbiA prenyltransferase family. Protoheme IX farnesyltransferase subfamily.

It is found in the cell inner membrane. The catalysed reaction is heme b + (2E,6E)-farnesyl diphosphate + H2O = Fe(II)-heme o + diphosphate. It functions in the pathway porphyrin-containing compound metabolism; heme O biosynthesis; heme O from protoheme: step 1/1. Converts heme B (protoheme IX) to heme O by substitution of the vinyl group on carbon 2 of heme B porphyrin ring with a hydroxyethyl farnesyl side group. This Pseudomonas syringae pv. syringae (strain B728a) protein is Protoheme IX farnesyltransferase.